The primary structure comprises 1311 residues: Sterol regulatory element-binding protein cleavage-activating protein (1311 aa).

Residues 1-18 are Cytoplasmic-facing; the sequence is MPLIDKLRERISRAFYSH. Residues 19-39 form a helical membrane-spanning segment; it reads GLLCASYPIPIIILTALCILA. The Lumenal portion of the chain corresponds to 40–277; that stretch reads SCYPLLKLPL…HIVHVHFKEE (238 aa). Residues 46–282 are loop-1; it reads KLPLPGTGPV…HFKEEIGIAE (237 aa). N242 and N261 each carry an N-linked (GlcNAc...) asparagine glycan. A helical transmembrane segment spans residues 278–298; the sequence is IGIAELIPLVTTYIILFAYIY. Residues 282-440 enclose the SSD domain; that stretch reads ELIPLVTTYI…MFFFTTVLSI (159 aa). Residues 299–310 lie on the Cytoplasmic side of the membrane; sequence FSTRKIDLVKSK. A helical transmembrane segment spans residues 311-331; it reads WGLALAAVVTVLSSLLMSVGL. Residues 332–342 are Lumenal-facing; sequence CTLFGLTPTLN. A helical membrane pass occupies residues 343 to 363; the sequence is GGEIFPYLVVVIGLENVLVLT. The Cytoplasmic segment spans residues 364–399; it reads KSVVSTPVDLEVKLRIAQGLRNESWFIMKNMATELG. The helical transmembrane segment at 400–420 threads the bilayer; that stretch reads IILIGYFTLVPAIQEFCLFAV. Position 421 (V421) is a topological domain, lumenal. Residues 422–442 traverse the membrane as a helical segment; sequence GLVSDFFLQMFFFTTVLSIDI. Over 443-512 the chain is Cytoplasmic; it reads RRMELADLNK…FFARTRLAQR (70 aa). The ER export signal motif lies at 445–450; that stretch reads MELADL. Residues 513-533 traverse the membrane as a helical segment; sequence IIMAGTVVWIGILVYTDPAGL. The interval 529–726 is loop-7; sequence DPAGLRNYLT…QTPADVTLYK (198 aa). At 534 to 723 the chain is on the lumenal side; the sequence is RNYLTVHVTE…TENQTPADVT (190 aa). N583 and N651 each carry an N-linked (GlcNAc...) asparagine glycan. The helical transmembrane segment at 724–744 threads the bilayer; that stretch reads LYKVAALGLASGIFLVLFFFL. Topologically, residues 745-1311 are cytoplasmic; the sequence is LYRLLCPKNY…YVPSVLEKLD (567 aa). Positions 747–1311 are interaction with srebf; it reads RLLCPKNYGQ…YVPSVLEKLD (565 aa). WD repeat units lie at residues 790 to 827, 997 to 1034, 1037 to 1076, 1109 to 1146, 1149 to 1187, 1190 to 1227, and 1230 to 1267; these read GHHM…CLTI, SFES…LRCS, DGQS…NQLQ, AHRK…CLFT, GHSG…RVSH, GHRG…KLYS, and QDLG…LLQT.

Belongs to the WD repeat SCAP family. Membrane region forms a homotetramer. Component of the SCAP-SREBP complex (composed of SCAP and srebf1/srebp1 or srebf2/srebp2). Forms a ternary complex with insig1 or insig2 through its transmembrane domains at high sterol concentrations. Interacts with the SEC23-SEC24 complex.

The protein resides in the endoplasmic reticulum membrane. It localises to the golgi apparatus membrane. The protein localises to the cytoplasmic vesicle. It is found in the COPII-coated vesicle membrane. Escort protein required for cholesterol as well as lipid homeostasis. Regulates export of the SCAP-SREBP complex from the endoplasmic reticulum to the Golgi upon low cholesterol, thereby regulating the processing of sterol regulatory element-binding proteins (SREBPs) SREBF1/SREBP1 and SREBF2/SREBP2. At high sterol concentrations, formation of a ternary complex with INSIG (INSIG1 or INSIG2) leads to mask the ER export signal in SCAP, promoting retention of the complex in the endoplasmic reticulum. Low sterol concentrations trigger release of INSIG, a conformational change in the SSD domain of SCAP, unmasking of the ER export signal, promoting recruitment into COPII-coated vesicles and transport of the SCAP-SREBP to the Golgi: in the Golgi, SREBPs are then processed, releasing the transcription factor fragment of SREBPs from the membrane, its import into the nucleus and up-regulation of LDLR, INSIG1 and the mevalonate pathway. Binds cholesterol via its SSD domain. This is Sterol regulatory element-binding protein cleavage-activating protein from Xenopus laevis (African clawed frog).